Reading from the N-terminus, the 190-residue chain is Nucleoside triphosphate pyrophosphatase (190 aa).

Aspartate 69 serves as the catalytic Proton acceptor.

It belongs to the Maf family. A divalent metal cation serves as cofactor.

Its subcellular location is the cytoplasm. It catalyses the reaction a ribonucleoside 5'-triphosphate + H2O = a ribonucleoside 5'-phosphate + diphosphate + H(+). The catalysed reaction is a 2'-deoxyribonucleoside 5'-triphosphate + H2O = a 2'-deoxyribonucleoside 5'-phosphate + diphosphate + H(+). Nucleoside triphosphate pyrophosphatase. May have a dual role in cell division arrest and in preventing the incorporation of modified nucleotides into cellular nucleic acids. This is Nucleoside triphosphate pyrophosphatase from Helicobacter pylori (strain HPAG1).